Consider the following 651-residue polypeptide: Receptor-like serine/threonine-protein kinase At4g25390 (651 aa).

The N-terminal stretch at 1–25 is a signal peptide; it reads MPSRSISAPVPVLAPAPIVSSLVPA. At 26–40 the chain is on the extracellular side; sequence APSGHQNKTTRIFPP. N-linked (GlcNAc...) asparagine glycosylation occurs at asparagine 32. A helical membrane pass occupies residues 41 to 61; the sequence is FVVAGAGAGFSLFITLSVCFC. At 62–651 the chain is on the cytoplasmic side; it reads KFSRKRSSPP…PLKTTRKQRR (590 aa). Residues 66–87 are disordered; sequence KRSSPPAENASSSPRRPSPREF. A compositionally biased stretch (low complexity) spans 69-87; that stretch reads SPPAENASSSPRRPSPREF. The 535-residue stretch at 99 to 633 folds into the Protein kinase domain; the sequence is FSQANRLGQG…LKGEVNLPEL (535 aa). Residues 105 to 113 and lysine 127 each bind ATP; that span reads LGQGGFGVV. The active-site Proton acceptor is the aspartate 225.

It belongs to the protein kinase superfamily. Ser/Thr protein kinase family.

It localises to the cell membrane. The enzyme catalyses L-seryl-[protein] + ATP = O-phospho-L-seryl-[protein] + ADP + H(+). It catalyses the reaction L-threonyl-[protein] + ATP = O-phospho-L-threonyl-[protein] + ADP + H(+). The polypeptide is Receptor-like serine/threonine-protein kinase At4g25390 (Arabidopsis thaliana (Mouse-ear cress)).